The primary structure comprises 253 residues: Ribosomal RNA small subunit methyltransferase A (253 aa).

Residues H12, L14, G39, E60, D81, and N104 each contribute to the S-adenosyl-L-methionine site.

Belongs to the class I-like SAM-binding methyltransferase superfamily. rRNA adenine N(6)-methyltransferase family. RsmA subfamily.

It localises to the cytoplasm. The catalysed reaction is adenosine(1518)/adenosine(1519) in 16S rRNA + 4 S-adenosyl-L-methionine = N(6)-dimethyladenosine(1518)/N(6)-dimethyladenosine(1519) in 16S rRNA + 4 S-adenosyl-L-homocysteine + 4 H(+). In terms of biological role, specifically dimethylates two adjacent adenosines (A1518 and A1519) in the loop of a conserved hairpin near the 3'-end of 16S rRNA in the 30S particle. May play a critical role in biogenesis of 30S subunits. This is Ribosomal RNA small subunit methyltransferase A from Acidovorax ebreus (strain TPSY) (Diaphorobacter sp. (strain TPSY)).